A 509-amino-acid polypeptide reads, in one-letter code: Maturase K (509 aa).

It belongs to the intron maturase 2 family. MatK subfamily.

It localises to the plastid. It is found in the chloroplast. Functionally, usually encoded in the trnK tRNA gene intron. Probably assists in splicing its own and other chloroplast group II introns. The sequence is that of Maturase K from Arpophyllum giganteum (Hyacinth orchid).